The following is a 506-amino-acid chain: 2-isopropylmalate synthase (506 aa).

The 263-residue stretch at 4–266 (ILFMDTTLRD…QSSIILKEIK (263 aa)) folds into the Pyruvate carboxyltransferase domain. Mn(2+) is bound by residues Asp13, His201, His203, and Asn237. The segment at 390-506 (NIKQLQVHFV…KLKALLTLVK (117 aa)) is regulatory domain.

The protein belongs to the alpha-IPM synthase/homocitrate synthase family. LeuA type 1 subfamily. Homodimer. Mn(2+) serves as cofactor.

The protein localises to the cytoplasm. The catalysed reaction is 3-methyl-2-oxobutanoate + acetyl-CoA + H2O = (2S)-2-isopropylmalate + CoA + H(+). It participates in amino-acid biosynthesis; L-leucine biosynthesis; L-leucine from 3-methyl-2-oxobutanoate: step 1/4. Its function is as follows. Catalyzes the condensation of the acetyl group of acetyl-CoA with 3-methyl-2-oxobutanoate (2-ketoisovalerate) to form 3-carboxy-3-hydroxy-4-methylpentanoate (2-isopropylmalate). The chain is 2-isopropylmalate synthase from Bacillus cytotoxicus (strain DSM 22905 / CIP 110041 / 391-98 / NVH 391-98).